We begin with the raw amino-acid sequence, 201 residues long: CASP-like protein 2B2 (201 aa).

At 1–28 (MSYLGVGVSPGNVSGSTTKMKLIDRKVR) the chain is on the cytoplasmic side. Residues 29-49 (VTELILRCLVCVLALVAAILI) form a helical membrane-spanning segment. Topologically, residues 50–71 (ATDVQVREIFMIQKKAKFTDMK) are extracellular. Residues 72–92 (ALVLLVVVNGIAAGYSLVQAV) traverse the membrane as a helical segment. Topologically, residues 93–108 (RCVVGLMKGRVLFSKP) are cytoplasmic. Residues 109–129 (LAWAIFFGDQAVAYLCVAGVA) traverse the membrane as a helical segment. Topologically, residues 130–166 (AAAQSAAFAKLGEPELQWMKICNMYGKFCNQVGEGIA) are extracellular. Residues 167–187 (SALFACIGMVLISCISAFGVF) traverse the membrane as a helical segment. Residues 188-201 (RLYGGSKSRPSSRW) are Cytoplasmic-facing.

The protein belongs to the Casparian strip membrane proteins (CASP) family. In terms of assembly, homodimer and heterodimers.

It is found in the cell membrane. The polypeptide is CASP-like protein 2B2 (Arabidopsis thaliana (Mouse-ear cress)).